We begin with the raw amino-acid sequence, 201 residues long: Small ribosomal subunit protein uS4c (201 aa).

The tract at residues 13 to 43 is disordered; that stretch reads RRLGDLPGLSRKAIKRPYPPGEHGQKPRKPS. The region spanning 90-154 is the S4 RNA-binding domain; the sequence is MRLDNTIFRL…SKQLVESYLA (65 aa).

Belongs to the universal ribosomal protein uS4 family. As to quaternary structure, part of the 30S ribosomal subunit. Contacts protein S5. The interaction surface between S4 and S5 is involved in control of translational fidelity.

It localises to the plastid. The protein resides in the chloroplast. One of the primary rRNA binding proteins, it binds directly to 16S rRNA where it nucleates assembly of the body of the 30S subunit. Its function is as follows. With S5 and S12 plays an important role in translational accuracy. The polypeptide is Small ribosomal subunit protein uS4c (rps4) (Porphyra purpurea (Red seaweed)).